We begin with the raw amino-acid sequence, 463 residues long: MNHLTTLDAGFLKAEDVDRHVSLAIGALAVIEGPAPDQEAFLSSLAQRLRPCTRFGQRLRLRPFDLGAPKWVDDPDFDLGRHVWRIALPRPGNEDQLFELIADLMARRLDRGRPLWEVWVIEGLADSKWAILTKLHHCMADGIAATHLLAGLSDESMSDSFASNIHTTMQSQSASVRRGGFRVNPSEALTASTAVMAGIVRAAKGASEIAAGVLSPAASSLNGPISDLRRYSAAKVPLADVEQVCRKFDVTINDVALAAITESYRNVLIQRGERPRFDSLRTLVPVSTRSNSALSKTDNRVSLMLPNLPVDQENPLQRLRIVHSRLTRAKAGGQRQFGNTLMAIANRLPFPMTAWAVGLLMRLPQRGVVTVATNVPGPRRPLQIMGRRVLDLYPVSPIAMQLRTSVAMLSYADDLYFGILADYDVVADAGQLARGIEDAVARLVAISKRRKVTRRRGALSLVV.

Position 1 is an N-acetylmethionine (methionine 1). Histidine 137 functions as the Proton acceptor in the catalytic mechanism.

The protein belongs to the long-chain O-acyltransferase family.

It catalyses the reaction an acyl-CoA + a 1,2-diacyl-sn-glycerol = a triacyl-sn-glycerol + CoA. It carries out the reaction di-(9Z)-octadecenoylglycerol + (9Z)-octadecenoyl-CoA = 1,2,3-tri-(9Z-octadecenoyl)-glycerol + CoA. Its pathway is glycerolipid metabolism; triacylglycerol biosynthesis. Functionally, catalyzes the terminal and only committed step in triacylglycerol synthesis by using diacylglycerol and fatty acyl CoA as substrates. Required for storage lipid synthesis. In terms of biological role, upon expression in E.coli functions as a triacylglycerol synthase, making triacylglycerol (TG) from diolein and long-chain fatty acyl-CoA. Prefers C(26:0)-CoA over C(18:1)-CoA. TG synthesis activity increases in M.tuberculosis upon oxygen depletion and NO treatment, with concomitant accumulation of TG in inclusion bodies. As disruption of the gene encoding this protein obviates TG synthesis this seems to be the major enzyme involved in production of TG. Has no wax synthase activity to produce wax esters. This is Probable diacyglycerol O-acyltransferase tgs1 (tgs1) from Mycobacterium tuberculosis (strain ATCC 25618 / H37Rv).